The following is a 227-amino-acid chain: Lipoprotein-releasing system ATP-binding protein LolD (227 aa).

Residues 6–227 enclose the ABC transporter domain; sequence LEMRGITKSY…RLDAGQLSDV (222 aa). Position 43–50 (43–50) interacts with ATP; sequence APSGAGKS.

It belongs to the ABC transporter superfamily. Lipoprotein translocase (TC 3.A.1.125) family. In terms of assembly, the complex is composed of two ATP-binding proteins (LolD) and two transmembrane proteins (LolC and LolE).

The protein localises to the cell inner membrane. Functionally, part of the ABC transporter complex LolCDE involved in the translocation of mature outer membrane-directed lipoproteins, from the inner membrane to the periplasmic chaperone, LolA. Responsible for the formation of the LolA-lipoprotein complex in an ATP-dependent manner. This Roseobacter denitrificans (strain ATCC 33942 / OCh 114) (Erythrobacter sp. (strain OCh 114)) protein is Lipoprotein-releasing system ATP-binding protein LolD.